The following is a 367-amino-acid chain: 3-dehydroquinate synthase (367 aa).

NAD(+)-binding positions include 72-77 (DGENYK), 106-110 (GVIGD), 130-131 (TT), Lys143, Lys152, and 170-173 (FLST). The Zn(2+) site is built by Glu185, His248, and His265.

The protein belongs to the sugar phosphate cyclases superfamily. Dehydroquinate synthase family. Co(2+) is required as a cofactor. Requires Zn(2+) as cofactor. It depends on NAD(+) as a cofactor.

It is found in the cytoplasm. It carries out the reaction 7-phospho-2-dehydro-3-deoxy-D-arabino-heptonate = 3-dehydroquinate + phosphate. It participates in metabolic intermediate biosynthesis; chorismate biosynthesis; chorismate from D-erythrose 4-phosphate and phosphoenolpyruvate: step 2/7. Its function is as follows. Catalyzes the conversion of 3-deoxy-D-arabino-heptulosonate 7-phosphate (DAHP) to dehydroquinate (DHQ). In Buchnera aphidicola subsp. Cinara cedri (strain Cc), this protein is 3-dehydroquinate synthase.